Consider the following 437-residue polypeptide: Purple acid phosphatase 21 (437 aa).

Residues 1–25 (MKKMKIFGFLISFSLFFLSPFVCQA) form the signal peptide. Residue asparagine 30 is glycosylated (N-linked (GlcNAc...) asparagine). Fe cation-binding residues include aspartate 152, aspartate 179, and tyrosine 182. Aspartate 179 provides a ligand contact to Zn(2+). Zn(2+)-binding residues include asparagine 212 and histidine 296. Asparagine 212 provides a ligand contact to substrate. Histidine 306 acts as the Proton donor in catalysis. Histidine 333 lines the Zn(2+) pocket. Residue 333–335 (HVH) participates in substrate binding. Residue histidine 335 coordinates Fe cation.

The protein belongs to the metallophosphoesterase superfamily. Purple acid phosphatase family. Homodimer. Requires Fe cation as cofactor. The cofactor is Zn(2+). Expressed flowers and siliques.

Its subcellular location is the secreted. It catalyses the reaction a phosphate monoester + H2O = an alcohol + phosphate. The chain is Purple acid phosphatase 21 (PAP21) from Arabidopsis thaliana (Mouse-ear cress).